Here is a 542-residue protein sequence, read N- to C-terminus: CTP synthase (542 aa).

An amidoligase domain region spans residues 1 to 265 (MARYVFITGG…DDEVLAAFGI (265 aa)). Ser13 is a CTP binding site. Position 13 (Ser13) interacts with UTP. ATP-binding positions include 14–19 (SLGKGI) and Asp71. Residues Asp71 and Glu139 each contribute to the Mg(2+) site. Residues 146–148 (DIE), 186–191 (KTKPTQ), and Lys222 contribute to the CTP site. Residues 186–191 (KTKPTQ) and Lys222 contribute to the UTP site. The 251-residue stretch at 291–541 (TIAIVGKYTG…IEAATEQSRL (251 aa)) folds into the Glutamine amidotransferase type-1 domain. Gly353 is an L-glutamine binding site. Residue Cys380 is the Nucleophile; for glutamine hydrolysis of the active site. L-glutamine contacts are provided by residues 381–384 (FGMQ), Glu404, and Arg469. Residues His514 and Glu516 contribute to the active site.

This sequence belongs to the CTP synthase family. As to quaternary structure, homotetramer.

It catalyses the reaction UTP + L-glutamine + ATP + H2O = CTP + L-glutamate + ADP + phosphate + 2 H(+). The enzyme catalyses L-glutamine + H2O = L-glutamate + NH4(+). It carries out the reaction UTP + NH4(+) + ATP = CTP + ADP + phosphate + 2 H(+). Its pathway is pyrimidine metabolism; CTP biosynthesis via de novo pathway; CTP from UDP: step 2/2. Its activity is regulated as follows. Allosterically activated by GTP, when glutamine is the substrate; GTP has no effect on the reaction when ammonia is the substrate. The allosteric effector GTP functions by stabilizing the protein conformation that binds the tetrahedral intermediate(s) formed during glutamine hydrolysis. Inhibited by the product CTP, via allosteric rather than competitive inhibition. Catalyzes the ATP-dependent amination of UTP to CTP with either L-glutamine or ammonia as the source of nitrogen. Regulates intracellular CTP levels through interactions with the four ribonucleotide triphosphates. The protein is CTP synthase of Rhizobium etli (strain ATCC 51251 / DSM 11541 / JCM 21823 / NBRC 15573 / CFN 42).